An 81-amino-acid polypeptide reads, in one-letter code: Photosystem I iron-sulfur center (81 aa).

4Fe-4S ferredoxin-type domains follow at residues 2–31 (AHTV…MVPW) and 39–68 (MASA…IRVY). [4Fe-4S] cluster contacts are provided by cysteine 11, cysteine 14, cysteine 17, cysteine 21, cysteine 48, cysteine 51, cysteine 54, and cysteine 58.

In terms of assembly, the eukaryotic PSI reaction center is composed of at least 11 subunits. [4Fe-4S] cluster serves as cofactor.

The protein resides in the plastid. It localises to the chloroplast thylakoid membrane. The enzyme catalyses reduced [plastocyanin] + hnu + oxidized [2Fe-2S]-[ferredoxin] = oxidized [plastocyanin] + reduced [2Fe-2S]-[ferredoxin]. Apoprotein for the two 4Fe-4S centers FA and FB of photosystem I (PSI); essential for photochemical activity. FB is the terminal electron acceptor of PSI, donating electrons to ferredoxin. The C-terminus interacts with PsaA/B/D and helps assemble the protein into the PSI complex. Required for binding of PsaD and PsaE to PSI. PSI is a plastocyanin/cytochrome c6-ferredoxin oxidoreductase, converting photonic excitation into a charge separation, which transfers an electron from the donor P700 chlorophyll pair to the spectroscopically characterized acceptors A0, A1, FX, FA and FB in turn. This chain is Photosystem I iron-sulfur center, found in Cyanidioschyzon merolae (strain NIES-3377 / 10D) (Unicellular red alga).